The following is a 341-amino-acid chain: GTP 3',8-cyclase (341 aa).

In terms of domain architecture, Radical SAM core spans 11–231 (KRNRPLRDLR…DLINKHMPVE (221 aa)). Arg20 serves as a coordination point for GTP. [4Fe-4S] cluster is bound by residues Cys27 and Cys31. Tyr33 lines the S-adenosyl-L-methionine pocket. [4Fe-4S] cluster is bound at residue Cys34. Residue Arg75 coordinates GTP. Gly79 lines the S-adenosyl-L-methionine pocket. Thr106 provides a ligand contact to GTP. Ser130 is a binding site for S-adenosyl-L-methionine. Lys167 is a GTP binding site. Met201 serves as a coordination point for S-adenosyl-L-methionine. 2 residues coordinate [4Fe-4S] cluster: Cys265 and Cys268. 270–272 (RAR) is a GTP binding site. A [4Fe-4S] cluster-binding site is contributed by Cys282.

The protein belongs to the radical SAM superfamily. MoaA family. As to quaternary structure, monomer and homodimer. [4Fe-4S] cluster serves as cofactor.

The catalysed reaction is GTP + AH2 + S-adenosyl-L-methionine = (8S)-3',8-cyclo-7,8-dihydroguanosine 5'-triphosphate + 5'-deoxyadenosine + L-methionine + A + H(+). Its pathway is cofactor biosynthesis; molybdopterin biosynthesis. In terms of biological role, catalyzes the cyclization of GTP to (8S)-3',8-cyclo-7,8-dihydroguanosine 5'-triphosphate. Required for both nitrate assimilation and respiration. This is GTP 3',8-cyclase from Bacillus subtilis (strain 168).